Here is a 443-residue protein sequence, read N- to C-terminus: Cyclin-A2-1 (443 aa).

The span at 1–10 (MHRASSKHTN) shows a compositional bias: basic residues. The tract at residues 1–61 (MHRASSKHTN…KRVARPSNKR (61 aa)) is disordered. Over residues 11–25 (AKKEAISTSKIRDNN) the composition is skewed to basic and acidic residues.

This sequence belongs to the cyclin family. Cyclin AB subfamily. In terms of tissue distribution, expressed in tissues with active cell division: apical root and shoot meristems, lateral root and leaf primordia, floral meristems and developing pollen.

May negatively regulate endocycles and act as a regulator of ploidy levels in endoreduplication. This Arabidopsis thaliana (Mouse-ear cress) protein is Cyclin-A2-1 (CYCA2-1).